The sequence spans 208 residues: Fibroblast growth factor 6 (208 aa).

The signal sequence occupies residues 1–37; it reads MALGQRLFITMSRGAGRVQGTLQALVFLGVLVGMVVP. N-linked (GlcNAc...) asparagine glycosylation occurs at Asn45. Cys90 and Cys157 form a disulfide bridge.

The protein belongs to the heparin-binding growth factors family. As to quaternary structure, interacts with FGFR1, FGFR2 and FGFR4. Affinity between fibroblast growth factors (FGFs) and their receptors is increased by heparan sulfate glycosaminoglycans that function as coreceptors. As to expression, embryos, adult muscles and adult testis.

The protein localises to the secreted. It localises to the extracellular space. In terms of biological role, plays an important role in the regulation of cell proliferation, cell differentiation, angiogenesis and myogenesis, and is required for normal muscle regeneration. The polypeptide is Fibroblast growth factor 6 (Fgf6) (Mus musculus (Mouse)).